A 357-amino-acid chain; its full sequence is UPF0283 membrane protein HSM_0945 (357 aa).

Transmembrane regions (helical) follow at residues 67–87 (LMATICLFSCGILAQSVQWLV), 96–116 (IAFVFAMVSLFLVLLGLGTII), and 213–233 (AVESALIVAVSPLAIVDMFFI).

This sequence belongs to the UPF0283 family.

It is found in the cell inner membrane. This chain is UPF0283 membrane protein HSM_0945, found in Histophilus somni (strain 2336) (Haemophilus somnus).